The following is an 822-amino-acid chain: Valine--tRNA ligase (822 aa).

A 'HIGH' region motif is present at residues 41–51; that stretch reads PNVTGQLHLGH. A 'KMSKS' region motif is present at residues 511 to 515; sequence KMSKS. ATP is bound at residue Lys514. A coiled-coil region spans residues 765-822; the sequence is EQKGRELKEIQFLKSEILRAEKILTNKGFLEKAPREKIDLERTKLEKLKEKLAFYEKK.

It belongs to the class-I aminoacyl-tRNA synthetase family. ValS type 1 subfamily. Monomer.

The protein resides in the cytoplasm. It catalyses the reaction tRNA(Val) + L-valine + ATP = L-valyl-tRNA(Val) + AMP + diphosphate. In terms of biological role, catalyzes the attachment of valine to tRNA(Val). As ValRS can inadvertently accommodate and process structurally similar amino acids such as threonine, to avoid such errors, it has a 'posttransfer' editing activity that hydrolyzes mischarged Thr-tRNA(Val) in a tRNA-dependent manner. This Mesomycoplasma hyopneumoniae (strain 7448) (Mycoplasma hyopneumoniae) protein is Valine--tRNA ligase.